An 894-amino-acid polypeptide reads, in one-letter code: Interleukin enhancer-binding factor 3 (894 aa).

One can recognise a DZF domain in the interval 5–378; that stretch reads RIFVNDDRHV…PMKRPMEEDG (374 aa). The disordered stretch occupies residues 50–86; sequence DEQEKGSSEQAESDNMDVPPEDDSKEGAGEQKTEHMT. Positions 60 to 73 are enriched in acidic residues; sequence AESDNMDVPPEDDS. At serine 62 the chain carries Phosphoserine. Residues 74 to 86 are compositionally biased toward basic and acidic residues; that stretch reads KEGAGEQKTEHMT. An N6-acetyllysine modification is found at lysine 100. The residue at position 188 (threonine 188) is a Phosphothreonine; by PKR. Serine 190 carries the phosphoserine modification. Lysine 297 participates in a covalent cross-link: Glycyl lysine isopeptide (Lys-Gly) (interchain with G-Cter in ubiquitin). Phosphothreonine; by PKR is present on threonine 315. Residue lysine 348 forms a Glycyl lysine isopeptide (Lys-Gly) (interchain with G-Cter in SUMO1) linkage. The segment at 363–401 is disordered; that stretch reads TTYAITPMKRPMEEDGEEKSPSKKKKKIQKKEEKAEPPQ. The short motif at 371 to 389 is the Bipartite nuclear localization signal element; the sequence is KRPMEEDGEEKSPSKKKKK. Basic and acidic residues predominate over residues 372-383; that stretch reads RPMEEDGEEKSP. Serine 382 and serine 384 each carry phosphoserine. A Glycyl lysine isopeptide (Lys-Gly) (interchain with G-Cter in SUMO2) cross-link involves residue lysine 396. One can recognise a DRBM 1 domain in the interval 398–467; it reads EPPQAMNALM…AVKVLQDMGL (70 aa). The residue at position 460 (lysine 460) is an N6-acetyllysine. The disordered stretch occupies residues 466–524; sequence GLPTGAEGRDSSKGEDSAEETEAKPAVVAPAPVVEAVSTPSAAFPSDATAEQGPILTKH. Basic and acidic residues predominate over residues 472–481; that stretch reads EGRDSSKGED. Serine 476, serine 477, and serine 482 each carry phosphoserine. Residue lysine 489 forms a Glycyl lysine isopeptide (Lys-Gly) (interchain with G-Cter in SUMO2) linkage. Residues 489-508 are compositionally biased toward low complexity; it reads KPAVVAPAPVVEAVSTPSAA. A DRBM 2 domain is found at 524–590; it reads HGKNPVMELN…ALAALEKLFP (67 aa). Position 592 is a phosphothreonine (threonine 592). The interaction with PRMT1 stretch occupies residues 609–894; it reads RGGPKFAAKP…ADHSMNYQYR (286 aa). 2 disordered regions span residues 625–660 and 718–894; these read MGGPMHNEVPPPPNLRGRGRGGSIRGRGRGRGFGGA and QGDN…YQYR. A compositionally biased stretch (gly residues) spans 644–660; that stretch reads RGGSIRGRGRGRGFGGA. Composition is skewed to low complexity over residues 743 to 770 and 777 to 792; these read PSYGSGYQSHQGQQQSYNQSPYSNYGPP and YNHGQGSYSYSNSYNS. Phosphoserine is present on residues serine 792, serine 810, serine 812, and serine 816. Composition is skewed to gly residues over residues 811-825 and 832-851; these read GSGGRSGGNSYGSGG and SHGGYGGGSGGGSSYQGKQG. Residues 857 to 866 are compositionally biased toward polar residues; it reads NYNSPGSGQN. Over residues 867–878 the composition is skewed to low complexity; it reads YSGPPSSYQSSQ.

In terms of assembly, identified in a IGF2BP1-dependent mRNP granule complex containing untranslated mRNAs. Interacts with FUS and SMN. Interacts (via C-terminus) with PRMT1. Forms a complex with ILF2. Can also bind to PRKDC/XRCC7: this may stabilize the interaction of PRKDC/XRCC7 and the heterodimeric complex of XRCC6/KU70 and XRCC5/KU80. Forms a heteromeric complex with ZNF346 and ILF3. Found in a nuclear export complex with XPO5, ILF3, Ran and double-stranded RNA or double-stranded minihelix VA1 RNA. Found in a nuclear export complex with XPO5, RAN, ILF3, ZNF346 and double-stranded RNA. Interacts with XPO5 and ZNF346. Forms a complex with ILF2, YLPM1, KHDRBS1, RBMX, NCOA5 and PPP1CA. Interacts with AGO1 and AGO2. Interacts with DHX36; this interaction occurs in a RNA-dependent manner. Interacts with ELAVL1; this interaction occurs in a RNA-dependent manner. Interacts with HAVCR2; this interaction promotes ILF3 ubiquitination and subsequent degradation. Phosphorylated at Thr-188 and Thr-315 by PKR in response to certain RNA viruses. This phosphorylation results in the dissociation of ILF2 from the ILF2-ILF3 complex resulting in a cytoplasmic sequestration of ILF3 where it can bind to viral RNAs and impede viral replication. Post-translationally, methylated by protein arginine N-methyltransferase 1. In terms of processing, ubiquitinated at Lys-297 in a TRIM47-dependent manner; this 'Lys-48'-linked ubiquitination promotes ILF3 degradation. As to expression, ubiquitous.

It localises to the nucleus. It is found in the nucleolus. The protein localises to the cytoplasm. Its function is as follows. RNA-binding protein that plays an essential role in the biogenesis of circular RNAs (circRNAs) which are produced by back-splicing circularization of pre-mRNAs. Within the nucleus, promotes circRNAs processing by stabilizing the regulatory elements residing in the flanking introns of the circularized exons. Plays thereby a role in the back-splicing of a subset of circRNAs. As a consequence, participates in a wide range of transcriptional and post-transcriptional processes. Binds to poly-U elements and AU-rich elements (AREs) in the 3'-UTR of target mRNAs. Upon viral infection, ILF3 accumulates in the cytoplasm and participates in the innate antiviral response. Mechanistically, ILF3 becomes phosphorylated and activated by the double-stranded RNA-activated protein kinase/PKR which releases ILF3 from cellular mature circRNAs. In turn, unbound ILF3 molecules are able to interact with and thus inhibit viral mRNAs. (Microbial infection) Plays a positive role in HIV-1 virus production by binding to and thereby stabilizing HIV-1 RNA, together with ILF3. The protein is Interleukin enhancer-binding factor 3 (ILF3) of Homo sapiens (Human).